A 476-amino-acid chain; its full sequence is NADP-dependent glyceraldehyde-3-phosphate dehydrogenase (476 aa).

Residue Arg-103 participates in substrate binding. Position 151 (Ser-151) interacts with NADP(+). 154 to 155 (NY) provides a ligand contact to substrate. Residues Lys-177, Thr-180, Asp-215, and 230–251 (GSTPVGEHIGHLAGMRPIMLEL) each bind NADP(+). Catalysis depends on residues Glu-250 and Cys-284. A substrate-binding site is contributed by 283 to 285 (RCT). Glu-377 contributes to the NADP(+) binding site. Residue Arg-437 participates in substrate binding.

This sequence belongs to the aldehyde dehydrogenase family. As to quaternary structure, homotetramer.

It carries out the reaction D-glyceraldehyde 3-phosphate + NADP(+) + H2O = (2R)-3-phosphoglycerate + NADPH + 2 H(+). Its function is as follows. Catalyzes the irreversible NADP-dependent oxidation of glyceraldehyde-3-phosphate to 3-phosphoglycerate. Is not able to use NAD instead of NADP. May play an important role in NADPH production in S.equinus. This is NADP-dependent glyceraldehyde-3-phosphate dehydrogenase (gapN) from Streptococcus equinus (Streptococcus bovis).